A 382-amino-acid chain; its full sequence is Mannitol-1-phosphate 5-dehydrogenase (382 aa).

3–14 (AVHFGAGNIGRG) is an NAD(+) binding site.

It belongs to the mannitol dehydrogenase family.

The enzyme catalyses D-mannitol 1-phosphate + NAD(+) = beta-D-fructose 6-phosphate + NADH + H(+). This chain is Mannitol-1-phosphate 5-dehydrogenase, found in Aliivibrio salmonicida (strain LFI1238) (Vibrio salmonicida (strain LFI1238)).